The primary structure comprises 430 residues: Elongation factor 1-alpha (430 aa).

Residues 7-219 (KPHVNIVFIG…DQIPEPEKPV (213 aa)) enclose the tr-type G domain. The interval 16–23 (GHVDHGKS) is G1. Residue 16 to 23 (GHVDHGKS) participates in GTP binding. Position 23 (serine 23) interacts with Mg(2+). The segment at 70 to 74 (GITID) is G2. The G3 stretch occupies residues 91–94 (DAPG). GTP is bound by residues 91–95 (DAPGH) and 146–149 (NKMD). Positions 146-149 (NKMD) are G4. Residues 183-185 (SAW) are G5.

This sequence belongs to the TRAFAC class translation factor GTPase superfamily. Classic translation factor GTPase family. EF-Tu/EF-1A subfamily.

It is found in the cytoplasm. The enzyme catalyses GTP + H2O = GDP + phosphate + H(+). Its function is as follows. GTP hydrolase that promotes the GTP-dependent binding of aminoacyl-tRNA to the A-site of ribosomes during protein biosynthesis. In Pyrococcus woesei, this protein is Elongation factor 1-alpha.